A 329-amino-acid chain; its full sequence is Ribosomal protein L11 methyltransferase (329 aa).

Positions 177, 198, 220, and 264 each coordinate S-adenosyl-L-methionine.

This sequence belongs to the methyltransferase superfamily. PrmA family.

It localises to the cytoplasm. It catalyses the reaction L-lysyl-[protein] + 3 S-adenosyl-L-methionine = N(6),N(6),N(6)-trimethyl-L-lysyl-[protein] + 3 S-adenosyl-L-homocysteine + 3 H(+). Functionally, methylates ribosomal protein L11. This Helicobacter pylori (strain HPAG1) protein is Ribosomal protein L11 methyltransferase.